Reading from the N-terminus, the 219-residue chain is Chloramphenicol acetyltransferase (219 aa).

The active-site Proton acceptor is the His190.

This sequence belongs to the chloramphenicol acetyltransferase family. As to quaternary structure, homotrimer.

It carries out the reaction chloramphenicol + acetyl-CoA = chloramphenicol 3-acetate + CoA. Functionally, this enzyme is an effector of chloramphenicol resistance in bacteria. This Clostridium perfringens protein is Chloramphenicol acetyltransferase (catQ).